The sequence spans 153 residues: Xanthine-guanine phosphoribosyltransferase (153 aa).

5-phospho-alpha-D-ribose 1-diphosphate is bound by residues 37 to 38 (RG) and 89 to 97 (DDLVDTGNT). Asp-90 is a Mg(2+) binding site. Residues Asp-93 and Ile-136 each contribute to the guanine site. Asp-93 and Ile-136 together coordinate xanthine. GMP contacts are provided by residues 93–97 (DTGNT) and 135–136 (WI).

This sequence belongs to the purine/pyrimidine phosphoribosyltransferase family. XGPT subfamily. In terms of assembly, homotetramer. Mg(2+) is required as a cofactor.

It localises to the cell inner membrane. It carries out the reaction GMP + diphosphate = guanine + 5-phospho-alpha-D-ribose 1-diphosphate. The enzyme catalyses XMP + diphosphate = xanthine + 5-phospho-alpha-D-ribose 1-diphosphate. The catalysed reaction is IMP + diphosphate = hypoxanthine + 5-phospho-alpha-D-ribose 1-diphosphate. It participates in purine metabolism; GMP biosynthesis via salvage pathway; GMP from guanine: step 1/1. It functions in the pathway purine metabolism; XMP biosynthesis via salvage pathway; XMP from xanthine: step 1/1. In terms of biological role, purine salvage pathway enzyme that catalyzes the transfer of the ribosyl-5-phosphate group from 5-phospho-alpha-D-ribose 1-diphosphate (PRPP) to the N9 position of the 6-oxopurines guanine and xanthine to form the corresponding ribonucleotides GMP (guanosine 5'-monophosphate) and XMP (xanthosine 5'-monophosphate), with the release of PPi. To a lesser extent, also acts on hypoxanthine. The sequence is that of Xanthine-guanine phosphoribosyltransferase from Pasteurella multocida (strain Pm70).